Reading from the N-terminus, the 105-residue chain is Large ribosomal subunit protein uL24 (105 aa).

Residues 77-93 show a composition bias toward basic and acidic residues; sequence DGKPTRVGYRKDDETGK. The disordered stretch occupies residues 77 to 105; that stretch reads DGKPTRVGYRKDDETGKNVRIAKSNGKDL.

This sequence belongs to the universal ribosomal protein uL24 family. In terms of assembly, part of the 50S ribosomal subunit.

In terms of biological role, one of two assembly initiator proteins, it binds directly to the 5'-end of the 23S rRNA, where it nucleates assembly of the 50S subunit. Functionally, one of the proteins that surrounds the polypeptide exit tunnel on the outside of the subunit. The sequence is that of Large ribosomal subunit protein uL24 from Mycolicibacterium gilvum (strain PYR-GCK) (Mycobacterium gilvum (strain PYR-GCK)).